A 203-amino-acid chain; its full sequence is N-(5'-phosphoribosyl)anthranilate isomerase (203 aa).

It belongs to the TrpF family.

The enzyme catalyses N-(5-phospho-beta-D-ribosyl)anthranilate = 1-(2-carboxyphenylamino)-1-deoxy-D-ribulose 5-phosphate. It participates in amino-acid biosynthesis; L-tryptophan biosynthesis; L-tryptophan from chorismate: step 3/5. The sequence is that of N-(5'-phosphoribosyl)anthranilate isomerase from Thermoanaerobacter sp. (strain X514).